We begin with the raw amino-acid sequence, 102 residues long: Death-associated protein 1 (102 aa).

The segment at 1–102 (MSSPPEGKLE…RTQHIQQPRK (102 aa)) is disordered. S2 carries the post-translational modification N-acetylserine. Phosphoserine; by MTOR is present on S3. K29 is subject to N6-acetyllysine. A compositionally biased stretch (basic and acidic residues) spans 32 to 43 (HTGDTKEEKDKD). The residue at position 49 (S49) is a Phosphoserine. Residue S51 is modified to Phosphoserine; by MTOR. S91 bears the Phosphoserine mark. Polar residues predominate over residues 92 to 102 (PRTQHIQQPRK).

This sequence belongs to the DAP-DAPL1 family. In terms of assembly, associates with ribosomes; inhibiting translation. Interacts with eiF5a (EIF5A and EIF5A2); inhibiting translation. Phosphorylated. Phosphorylation by MTOR inhibits the suppressive activity of DAP toward autophagy.

Ribosome-binding protein involved in ribosome hibernation, a process during which ribosomes are stabilized in an inactive state and preserved from proteasomal degradation. Acts via its association with eiF5a (EIF5A and EIF5A2) at the polypeptide exit tunnel of the ribosome, preventing mRNA translation. Involved in ribosome hibernation in the mature oocyte by preventing mRNA translation, leading to ribosome inactivation. Ribosomes, which are produced in large quantities during oogenesis, are stored and translationally repressed in the oocyte and early embryo. Also acts as a negative regulator of autophagy. Involved in mediating interferon-gamma-induced cell death. This chain is Death-associated protein 1, found in Homo sapiens (Human).